Reading from the N-terminus, the 97-residue chain is Kininogen-1 (97 aa).

Positions 1–23 (MRLWFCLSFLIILCVEHFPGTLA) are cleaved as a signal peptide.

This sequence belongs to the bradykinin-related peptide family. As to expression, expressed by the skin glands.

Its subcellular location is the secreted. Functionally, [Ala3,Thr6]bradykinin: produces in vitro relaxation of rat arterial smooth muscle and constriction of intestinal smooth muscle. Possesses insulin-releasing activity. May target bradykinin receptors (BDKRB). In Bombina variegata (Yellow-bellied toad), this protein is Kininogen-1.